Here is a 274-residue protein sequence, read N- to C-terminus: Large ribosomal subunit protein uL2cz/uL2cy (274 aa).

2 disordered regions span residues 1–23 (MAIHLYKTSTPSTRNGAVGSQVK) and 223–274 (MNPV…RRSK).

This sequence belongs to the universal ribosomal protein uL2 family. In terms of assembly, part of the 50S ribosomal subunit.

It localises to the plastid. Its subcellular location is the chloroplast. This is Large ribosomal subunit protein uL2cz/uL2cy (rpl2-A) from Ranunculus macranthus (Large buttercup).